Consider the following 258-residue polypeptide: Aquaporin PIP1-2 (258 aa).

Positions 1–37 (MEGKEEDVRLGANKFTERQPIGTAAQSQDKDYKEPPP) are disordered. The Cytoplasmic segment spans residues 1–55 (MEGKEEDVRLGANKFTERQPIGTAAQSQDKDYKEPPPAPLFEPGELSSWSFYRAG). A helical transmembrane segment spans residues 56-76 (IAEFVATFLFLYITILTVMGV). Residues 77 to 89 (VKSSTKCSTVGIQ) are Extracellular-facing. The helical transmembrane segment at 90–110 (GIAWAFGGMIFALVYCTAGIS) threads the bilayer. Topologically, residues 111–133 (GGHINPAVTFGLFLARKLSLTRA) are cytoplasmic. An NPA 1 motif is present at residues 115–117 (NPA). A helical transmembrane segment spans residues 134–154 (LFYMVMQCLGAICGAGVVKGF). Over 155–175 (QKGLYENNGGGANVVAPGYTK) the chain is Extracellular. A helical transmembrane segment spans residues 176 to 196 (GDGLGAEIVGTFILVYTVFSA). At 197–209 (TDAKRSARDSHVP) the chain is on the cytoplasmic side. Residues 210–230 (ILAPLPIGFAVFLVHLATIPI) traverse the membrane as a helical segment. Over 231-258 (TGTGINPARSLGAAIIYNKGHAWDDHWI) the chain is Extracellular. Residues 236–238 (NPA) carry the NPA 2 motif.

It belongs to the MIP/aquaporin (TC 1.A.8) family. PIP (TC 1.A.8.11) subfamily. As to expression, barely detectable in roots, leaves and fruits.

Its subcellular location is the cell membrane. Its function is as follows. Water channel required to facilitate the transport of water across cell membrane; mercury-insensitive. Contributes to the tolerance to multiple abiotic stresses including salt (NaCl), cold and water deprivation, by modulating cytosolic K(+)/Na(+) ratio, maintaining osmotic balance, and reducing membrane injury (e.g. oxidative injury). In Musa acuminata (Banana), this protein is Aquaporin PIP1-2.